We begin with the raw amino-acid sequence, 613 residues long: Xaa-Pro aminopeptidase ApepP (613 aa).

Arg77 and His388 together coordinate substrate. Positions 408, 419, and 482 each coordinate Mn(2+). His482, His491, and Glu517 together coordinate substrate. 2 residues coordinate Mn(2+): Glu517 and Glu531.

Belongs to the peptidase M24B family. Requires Mn(2+) as cofactor. As to expression, detected in gut, brain, testes and ovary.

It localises to the cytoplasm. The catalysed reaction is Release of any N-terminal amino acid, including proline, that is linked to proline, even from a dipeptide or tripeptide.. With respect to regulation, inhibited by the chelating agent EDTA. Divalent metal ions have substrate- and concentration-dependent effects on activity. Activity towards bradykinin is inhibited with increasing Mn(2+) concentration. Activity towards substance P is stimulated by low Mn(2+) concentrations (in the range 10 uM-1 mM) but inhibited by Mn(2+) concentrations in excess of 1 mM. Ca(2+), Mg(2+) and Co(2+) stimulate activity towards substance P at concentrations of 10-100 uM but are inhibitory at concentrations of 1 mM. Zn(2+), Ni(2+) and Cu(2+) strongly inhibit activity towards substance P at concentrations of 1 mM. In terms of biological role, catalyzes the removal of a penultimate prolyl residue from the N-termini of peptides, such as Arg-Pro-Pro. The protein is Xaa-Pro aminopeptidase ApepP of Drosophila melanogaster (Fruit fly).